A 734-amino-acid chain; its full sequence is 1,4-alpha-glucan branching enzyme GlgB (734 aa).

Residue Asp414 is the Nucleophile of the active site. Glu467 acts as the Proton donor in catalysis.

It belongs to the glycosyl hydrolase 13 family. GlgB subfamily. As to quaternary structure, monomer.

It catalyses the reaction Transfers a segment of a (1-&gt;4)-alpha-D-glucan chain to a primary hydroxy group in a similar glucan chain.. The protein operates within glycan biosynthesis; glycogen biosynthesis. Its function is as follows. Catalyzes the formation of the alpha-1,6-glucosidic linkages in glycogen by scission of a 1,4-alpha-linked oligosaccharide from growing alpha-1,4-glucan chains and the subsequent attachment of the oligosaccharide to the alpha-1,6 position. The protein is 1,4-alpha-glucan branching enzyme GlgB of Myxococcus xanthus (strain DK1622).